A 372-amino-acid chain; its full sequence is Heat-inducible transcription repressor HrcA (372 aa).

Residues 300-334 (YGRSGAAGEPAGNDPVGEPETESETESQTNDTEPI) are disordered.

The protein belongs to the HrcA family.

Negative regulator of class I heat shock genes (grpE-dnaK-dnaJ and groELS operons). Prevents heat-shock induction of these operons. This chain is Heat-inducible transcription repressor HrcA, found in Bifidobacterium longum (strain NCC 2705).